The sequence spans 476 residues: 3-isopropylmalate dehydratase large subunit (476 aa).

[4Fe-4S] cluster is bound by residues Cys353, Cys413, and Cys416.

Belongs to the aconitase/IPM isomerase family. LeuC type 1 subfamily. In terms of assembly, heterodimer of LeuC and LeuD. The cofactor is [4Fe-4S] cluster.

It carries out the reaction (2R,3S)-3-isopropylmalate = (2S)-2-isopropylmalate. It participates in amino-acid biosynthesis; L-leucine biosynthesis; L-leucine from 3-methyl-2-oxobutanoate: step 2/4. Its function is as follows. Catalyzes the isomerization between 2-isopropylmalate and 3-isopropylmalate, via the formation of 2-isopropylmaleate. The sequence is that of 3-isopropylmalate dehydratase large subunit from Yersinia pseudotuberculosis serotype IB (strain PB1/+).